Here is a 118-residue protein sequence, read N- to C-terminus: Large ribosomal subunit protein bL20 (118 aa).

The protein belongs to the bacterial ribosomal protein bL20 family.

Binds directly to 23S ribosomal RNA and is necessary for the in vitro assembly process of the 50S ribosomal subunit. It is not involved in the protein synthesizing functions of that subunit. In Phenylobacterium zucineum (strain HLK1), this protein is Large ribosomal subunit protein bL20.